Consider the following 640-residue polypeptide: Protein UL35 (640 aa).

3 disordered regions span residues 353 to 373 (ERGEFGDEDEEQENDGEPREA), 500 to 571 (ASSS…PRQR), and 586 to 640 (AYSH…LRHL). The segment covering 358–367 (GDEDEEQEND) has biased composition (acidic residues). Positions 500–562 (ASSSSASSSS…LSGSHGISSA (63 aa)) are enriched in low complexity. The span at 588 to 598 (SHHRRHRRRRS) shows a compositional bias: basic residues. Residues 631 to 640 (DDLAENLRHL) are compositionally biased toward basic and acidic residues.

The protein belongs to the herpesviridae pp85 family. As to quaternary structure, interacts with UL82. Interacts with isoform UL35A. Interacts with host UBP7; this interaction significantly inhibits the ability of USP7 to form nuclear bodies. Interacts with host DCAF1 (via C-terminus). Interacts with host SNX5; this interaction allows proper gB localization during viral assembly. Interacts with host TBK1; this interaction prevents type I interferon production. In terms of assembly, interacts with UL82. Interacts with isoform UL35. Interacts with host UBP7; this interaction significantly inhibits the ability of USP7 to form nuclear bodies. Interacts with host SNX5; this interaction allows proper gB localization during viral assembly.

It is found in the virion tegument. Its subcellular location is the host nucleus. It localises to the host cytoplasm. Plays important role in immediate-early gene expression through interaction with UL82. Forms nuclear bodies in host nucleus, independently of PML. In turn, UL35 nuclear bodies associate with and remodel PML bodies. Through interaction with host DCAF1, causes cells to accumulate in the G2 phase of the cell cycle by inducing a DNA damage response. Regulates viral assembly by controlling the localization of the essential gB through regulation of a retrograde transport pathway. This modulation occurs via binding and inhibition of host sorting nexin 5/SNX5. Also plays a role in the inhibition of pattern recognition receptor-mediated type I interferon signaling at the level of TBK1. In terms of biological role, promotes cytoplasmic UL82 accumulation and inhibits UL35-containing nuclear bodies formation. Regulates viral assembly by controlling the localization of the essential gB through regulation of a retrograde transport pathway. This modulation occurs via binding and inhibition of host sorting nexin 5/SNX5. This is Protein UL35 (UL35) from Homo sapiens (Human).